Consider the following 442-residue polypeptide: Cytochrome c biogenesis CcmF C-terminal-like mitochondrial protein (442 aa).

The next 3 helical transmembrane spans lie at Asn-6–Leu-26, Pro-39–Leu-59, and Tyr-122–Ala-142. The interval Arg-151–Cys-175 is disordered. Over residues Glu-166 to Cys-175 the composition is skewed to basic and acidic residues. The chain crosses the membrane as a helical span at residues Phe-411–Leu-431.

The protein belongs to the CcmF/CycK/Ccl1/NrfE/CcsA family. As to quaternary structure, interacts with CCMFN2.

It is found in the mitochondrion inner membrane. Forms a complex with CCMFN1, CCMFN2 and CCMH that performs the assembly of heme with c-type apocytochromes in mitochondria. In Arabidopsis thaliana (Mouse-ear cress), this protein is Cytochrome c biogenesis CcmF C-terminal-like mitochondrial protein (CCMFC).